We begin with the raw amino-acid sequence, 408 residues long: LIN1-like protein (408 aa).

Residues 1-161 (MKRTLRNPGN…SVPSSPKRMS (161 aa)) form a disordered region. Over residues 41 to 52 (YYESESEEDEDQ) the composition is skewed to acidic residues. 3 stretches are compositionally biased toward basic and acidic residues: residues 53 to 62 (ILNKEKKEGQ), 73 to 109 (DEKR…KEVL), and 119 to 129 (NGKYSKLRYED). Residues 344 to 402 (SSQYNFKWEFDDKTYGPYTASQIQAWSNEGYFTDAKHAAFIQLANMDEWMYPNNICFCD) enclose the GYF domain.

This sequence belongs to the LIN1 family.

The polypeptide is LIN1-like protein (Schizosaccharomyces pombe (strain 972 / ATCC 24843) (Fission yeast)).